A 404-amino-acid polypeptide reads, in one-letter code: SAC3 domain-containing protein 1 (404 aa).

Disordered stretches follow at residues 1-58 and 77-117; these read MAGR…GTCP and RLEV…QLRP. Pro residues predominate over residues 12-21; it reads PPRPAAPHPR. Over residues 87 to 101 the composition is skewed to basic and acidic residues; sequence DPPRADPQRAVKEYS. Residues 203–379 enclose the PCI domain; that stretch reads QVQEGFGSLR…TCKVLVESKL (177 aa). Ser-402 bears the Phosphoserine mark.

The protein belongs to the SAC3 family. As to quaternary structure, may be part of a SEM1-containing complex.

The protein resides in the cytoplasm. Its subcellular location is the cytoskeleton. The protein localises to the microtubule organizing center. It localises to the centrosome. It is found in the spindle. In terms of biological role, involved in centrosome duplication and mitotic progression. This chain is SAC3 domain-containing protein 1 (SAC3D1), found in Homo sapiens (Human).